The following is an 84-amino-acid chain: Small ribosomal subunit protein bS20 (84 aa).

It belongs to the bacterial ribosomal protein bS20 family.

Functionally, binds directly to 16S ribosomal RNA. This Parabacteroides distasonis (strain ATCC 8503 / DSM 20701 / CIP 104284 / JCM 5825 / NCTC 11152) protein is Small ribosomal subunit protein bS20.